The chain runs to 350 residues: Probable L-aspartate decarboxylase (350 aa).

Position 206 is an N6-(pyridoxal phosphate)lysine (Lys-206).

This sequence belongs to the group II decarboxylase family. MfnA subfamily. Pyridoxal 5'-phosphate serves as cofactor.

The catalysed reaction is L-aspartate + H(+) = beta-alanine + CO2. The protein operates within cofactor biosynthesis; coenzyme A biosynthesis. Catalyzes the decarboxylation of L-aspartate to produce beta-alanine. The sequence is that of Probable L-aspartate decarboxylase from Haloarcula marismortui (strain ATCC 43049 / DSM 3752 / JCM 8966 / VKM B-1809) (Halobacterium marismortui).